The primary structure comprises 387 residues: Succinate--CoA ligase [ADP-forming] subunit beta (387 aa).

The region spanning 9-236 (KELFAKHNVP…KDATDPLELK (228 aa)) is the ATP-grasp domain. ATP contacts are provided by residues Lys-45, 52–54 (GRG), Ser-94, and Glu-99. Mg(2+) contacts are provided by Asn-191 and Asp-205. Substrate is bound by residues Asn-256 and 318–320 (GIT).

Belongs to the succinate/malate CoA ligase beta subunit family. As to quaternary structure, heterotetramer of two alpha and two beta subunits. Mg(2+) serves as cofactor.

It catalyses the reaction succinate + ATP + CoA = succinyl-CoA + ADP + phosphate. It carries out the reaction GTP + succinate + CoA = succinyl-CoA + GDP + phosphate. The protein operates within carbohydrate metabolism; tricarboxylic acid cycle; succinate from succinyl-CoA (ligase route): step 1/1. Succinyl-CoA synthetase functions in the citric acid cycle (TCA), coupling the hydrolysis of succinyl-CoA to the synthesis of either ATP or GTP and thus represents the only step of substrate-level phosphorylation in the TCA. The beta subunit provides nucleotide specificity of the enzyme and binds the substrate succinate, while the binding sites for coenzyme A and phosphate are found in the alpha subunit. The sequence is that of Succinate--CoA ligase [ADP-forming] subunit beta from Mycolicibacterium vanbaalenii (strain DSM 7251 / JCM 13017 / BCRC 16820 / KCTC 9966 / NRRL B-24157 / PYR-1) (Mycobacterium vanbaalenii).